The following is a 230-amino-acid chain: 2,3-bisphosphoglycerate-dependent phosphoglycerate mutase (230 aa).

Residues 8 to 15, 21 to 22, Arg60, 87 to 90, Lys98, 114 to 115, and 183 to 184 each bind substrate; these read RHGESEWN, TG, ERHY, RR, and GN. Residue His9 is the Tele-phosphohistidine intermediate of the active site. Catalysis depends on Glu87, which acts as the Proton donor/acceptor.

It belongs to the phosphoglycerate mutase family. BPG-dependent PGAM subfamily.

The catalysed reaction is (2R)-2-phosphoglycerate = (2R)-3-phosphoglycerate. It functions in the pathway carbohydrate degradation; glycolysis; pyruvate from D-glyceraldehyde 3-phosphate: step 3/5. In terms of biological role, catalyzes the interconversion of 2-phosphoglycerate and 3-phosphoglycerate. This is 2,3-bisphosphoglycerate-dependent phosphoglycerate mutase from Streptococcus agalactiae serotype Ia (strain ATCC 27591 / A909 / CDC SS700).